Here is a 132-residue protein sequence, read N- to C-terminus: Ribosome-binding factor A (132 aa).

This sequence belongs to the RbfA family. As to quaternary structure, monomer. Binds 30S ribosomal subunits, but not 50S ribosomal subunits or 70S ribosomes.

The protein resides in the cytoplasm. Functionally, one of several proteins that assist in the late maturation steps of the functional core of the 30S ribosomal subunit. Associates with free 30S ribosomal subunits (but not with 30S subunits that are part of 70S ribosomes or polysomes). Required for efficient processing of 16S rRNA. May interact with the 5'-terminal helix region of 16S rRNA. The protein is Ribosome-binding factor A of Burkholderia cenocepacia (strain ATCC BAA-245 / DSM 16553 / LMG 16656 / NCTC 13227 / J2315 / CF5610) (Burkholderia cepacia (strain J2315)).